The primary structure comprises 575 residues: 2-succinyl-5-enolpyruvyl-6-hydroxy-3-cyclohexene-1-carboxylate synthase (575 aa).

It belongs to the TPP enzyme family. MenD subfamily. In terms of assembly, homodimer. Mg(2+) serves as cofactor. The cofactor is Mn(2+). Thiamine diphosphate is required as a cofactor.

It carries out the reaction isochorismate + 2-oxoglutarate + H(+) = 5-enolpyruvoyl-6-hydroxy-2-succinyl-cyclohex-3-ene-1-carboxylate + CO2. It participates in quinol/quinone metabolism; 1,4-dihydroxy-2-naphthoate biosynthesis; 1,4-dihydroxy-2-naphthoate from chorismate: step 2/7. Its pathway is quinol/quinone metabolism; menaquinone biosynthesis. Functionally, catalyzes the thiamine diphosphate-dependent decarboxylation of 2-oxoglutarate and the subsequent addition of the resulting succinic semialdehyde-thiamine pyrophosphate anion to isochorismate to yield 2-succinyl-5-enolpyruvyl-6-hydroxy-3-cyclohexene-1-carboxylate (SEPHCHC). The polypeptide is 2-succinyl-5-enolpyruvyl-6-hydroxy-3-cyclohexene-1-carboxylate synthase (Syntrophus aciditrophicus (strain SB)).